The chain runs to 584 residues: MTISDHPETEPKWWKEATIYQIYPASFKDSNNDGWGDLKGITSKLQYIKDLGVDAIWVCPFYDSPQQDMGYDISNYEKVWPTYGTNEDCFELIDKTHKLGMKFITDLVINHCSTEHEWFKESRSSKTNPKRDWFFWRPPKGYDAEGKPIPPNNWKSFFGGSAWTFDETTNEFYLRLFASRQVDLNWENEDCRRAIFESAVGFWLDHGVDGFRIDTAGLYSKRPGLPDSPIFDKTSKLQHPNWGSHNGPRIHEYHQELHRFMKNRVKDGREIMTVGEVAHGSDNALYTSAARYEVSEVFSFTHVELGTSPFFRYNIVPFTLKQWKEAIASNFLFINGTDSWATTYIENHDQARSITRFADDSPKYRKISGKLLTLLECSLTGTLYVYQGQEIGQINFKEWPIEKYEDVDVKNNYEIIKKSFGKNSKEMKDFFKGIALLSRDHSRTPMPWTKDKPNAGFTGPDVKPWFFLNESFEQGINVEQESRDDDSVLNFWKRALQARKKYKELMIYGYDFQFIDLDSDQIFSFTKEYEDKTLFAALNFSGEEIEFSLPREGASLSFILGNYDDTDVSSRVLKPWEGRIYLVK.

Aspartate 214 serves as the catalytic Nucleophile. Residue glutamate 276 is the Proton donor of the active site.

This sequence belongs to the glycosyl hydrolase 13 family.

It catalyses the reaction Hydrolysis of terminal, non-reducing (1-&gt;4)-linked alpha-D-glucose residues with release of alpha-D-glucose.. The chain is Alpha-glucosidase MAL32 (MAL32) from Saccharomyces cerevisiae (strain ATCC 204508 / S288c) (Baker's yeast).